Here is a 454-residue protein sequence, read N- to C-terminus: MSGTRASNDRSSHPGAGGHKRPRYDVGNKVTVVLGAQWGDEGKGKVVDLLAMDSDIICRCQGGNNAGHTVVVEGKEYDFHLFPSGIINPKAISFIGNGVVIHLPGLFEEADKNEKKGLKDWEKRLIISDRAHIVCDFHQAVDGLQEVQRQAQEGKNIGTTKKGIGPTYSSKASRTGLRICDLLSDFDEFSARFKNLAHQYQSMFSNLEVDVDGQLKKLKMYAEKIRPMVRDGVYFMYDALHGSPKKILVEGANAALLDIDFGTYPFVTSSNCTVGGVCTGLGIPPQNVGNVYGVVKAYTTRVGIGAFPTEQINESGTLLQTRGHEWGVTTGRKRRCGWLDLVILRYAHMINGFTALALTKLDILDVLDEIKVGVAYRLNGKRIPYFPANQEILQKIEVEYEVMPGWKSDTTGARKWDDLPTKAQNYIRFVETHIGVPVKWVGVGKSRESMIELF.

The tract at residues methionine 1 to tyrosine 24 is disordered. GTP is bound by residues glycine 39–lysine 45 and glycine 67–threonine 69. Catalysis depends on aspartate 40, which acts as the Proton acceptor. Mg(2+) is bound by residues aspartate 40 and glycine 67. Aspartate 40 is a substrate binding site. Residues aspartate 40–lysine 43, asparagine 65–histidine 68, threonine 160, arginine 174, asparagine 253, threonine 268, and arginine 332 each bind IMP. The active-site Proton donor is histidine 68. Valine 328–arginine 334 provides a ligand contact to substrate. GTP is bound by residues arginine 334, lysine 360 to aspartate 362, and glycine 442 to lysine 445.

It belongs to the adenylosuccinate synthetase family. As to quaternary structure, homodimer. The cofactor is Mg(2+).

It is found in the cytoplasm. It catalyses the reaction IMP + L-aspartate + GTP = N(6)-(1,2-dicarboxyethyl)-AMP + GDP + phosphate + 2 H(+). It functions in the pathway purine metabolism; AMP biosynthesis via de novo pathway; AMP from IMP: step 1/2. Functionally, component of the purine nucleotide cycle (PNC), which interconverts IMP and AMP to regulate the nucleotide levels in various tissues, and which contributes to glycolysis and ammoniagenesis. Catalyzes the first committed step in the biosynthesis of AMP from IMP. This chain is Adenylosuccinate synthetase isozyme 1 B (adss1-b), found in Xenopus laevis (African clawed frog).